Consider the following 1371-residue polypeptide: Serine protease pic autotransporter (1371 aa).

The N-terminal stretch at 1 to 55 (MNKVYSLKYCPVTGGLIVVSELASRVIKKTCRRLTHILLAGIPAVYLYYPQISQA) is a signal peptide. In terms of domain architecture, Peptidase S6 spans 56-301 (GIVRSDIAYQ…NVIPTDYLNQ (246 aa)). Active-site charge relay system residues include H127, D155, and S258. Residues 1105–1371 (DTNGDAGAWA…AVNANFRYMF (267 aa)) enclose the Autotransporter domain.

Post-translationally, cleaved to release the mature protein from the outer membrane.

Its subcellular location is the periplasm. It localises to the secreted. It is found in the cell surface. The protein localises to the cell outer membrane. Functionally, involved in virulence of uropathogenic E.coli although it is not known how it contributes to it. Has no mucinase activity. This chain is Serine protease pic autotransporter (pic), found in Escherichia coli O6:H1 (strain CFT073 / ATCC 700928 / UPEC).